A 55-amino-acid chain; its full sequence is Large ribosomal subunit protein bL33 (55 aa).

Belongs to the bacterial ribosomal protein bL33 family.

This Buchnera aphidicola subsp. Acyrthosiphon pisum (strain APS) (Acyrthosiphon pisum symbiotic bacterium) protein is Large ribosomal subunit protein bL33 (rpmG).